The following is a 154-amino-acid chain: Cold shock domain-containing protein C2 (154 aa).

S19 is modified (phosphoserine). A disordered region spans residues G38–A62. One can recognise a CSD domain in the interval V69 to T136.

It is found in the nucleus. The protein resides in the cytoplasm. Functionally, RNA-binding factor which binds specifically to the very 3'-UTR ends of both histone H1 and H3.3 mRNAs, encompassing the polyadenylation signal. Might play a central role in the negative regulation of histone variant synthesis in the developing brain. This chain is Cold shock domain-containing protein C2 (Csdc2), found in Mus musculus (Mouse).